The following is a 131-amino-acid chain: Large ribosomal subunit protein bL12c (131 aa).

This sequence belongs to the bacterial ribosomal protein bL12 family. Homodimer. Part of the ribosomal stalk of the 50S ribosomal subunit. Forms a multimeric L10(L12)X complex, where L10 forms an elongated spine to which 2 to 4 L12 dimers bind in a sequential fashion. Binds GTP-bound translation factors.

It localises to the plastid. Its subcellular location is the chloroplast. Forms part of the ribosomal stalk which helps the ribosome interact with GTP-bound translation factors. Is thus essential for accurate translation. The protein is Large ribosomal subunit protein bL12c of Euglena gracilis.